A 72-amino-acid polypeptide reads, in one-letter code: Translational regulator CsrA (72 aa).

The protein belongs to the CsrA/RsmA family. As to quaternary structure, homodimer; the beta-strands of each monomer intercalate to form a hydrophobic core, while the alpha-helices form wings that extend away from the core.

The protein localises to the cytoplasm. Functionally, a translational regulator that binds mRNA to regulate translation initiation and/or mRNA stability. Usually binds in the 5'-UTR at or near the Shine-Dalgarno sequence preventing ribosome-binding, thus repressing translation. Its main target seems to be the major flagellin gene, while its function is anatagonized by FliW. This is Translational regulator CsrA from Clostridium botulinum (strain 657 / Type Ba4).